The chain runs to 238 residues: Auxin-responsive protein IAA2 (238 aa).

An EAR-like (transcriptional repression) motif is present at residues 24 to 28 (LCLGL). 3 stretches are compositionally biased toward low complexity: residues 33–44 (SSSSSSKPSEGS), 59–69 (ASKPSGAAAAA), and 85–94 (ASSSSSSSKQ). 2 disordered regions span residues 33–69 (SSSS…AAAA) and 82–114 (RNLA…KDGG). Residues 118–216 (GMFVKINMDG…TAKRLRVLKS (99 aa)) form the PB1 domain. The segment at 217 to 238 (SDLPPPSLMRAAGSRKRAAADS) is disordered. Residues 229-238 (GSRKRAAADS) show a composition bias toward basic residues.

This sequence belongs to the Aux/IAA family. In terms of assembly, homodimers and heterodimers. Highly expressed in flowers.

The protein localises to the nucleus. Aux/IAA proteins are short-lived transcriptional factors that function as repressors of early auxin response genes at low auxin concentrations. This chain is Auxin-responsive protein IAA2 (IAA2), found in Oryza sativa subsp. japonica (Rice).